The primary structure comprises 120 residues: NAD(P)H-quinone oxidoreductase subunit 3, chloroplastic (120 aa).

A run of 3 helical transmembrane segments spans residues 9–29 (IFWA…FISG), 64–84 (MFAL…PWAM), and 88–108 (VLGV…IVGS).

This sequence belongs to the complex I subunit 3 family. NDH is composed of at least 16 different subunits, 5 of which are encoded in the nucleus.

It is found in the plastid. The protein resides in the chloroplast thylakoid membrane. The catalysed reaction is a plastoquinone + NADH + (n+1) H(+)(in) = a plastoquinol + NAD(+) + n H(+)(out). It carries out the reaction a plastoquinone + NADPH + (n+1) H(+)(in) = a plastoquinol + NADP(+) + n H(+)(out). Its function is as follows. NDH shuttles electrons from NAD(P)H:plastoquinone, via FMN and iron-sulfur (Fe-S) centers, to quinones in the photosynthetic chain and possibly in a chloroplast respiratory chain. The immediate electron acceptor for the enzyme in this species is believed to be plastoquinone. Couples the redox reaction to proton translocation, and thus conserves the redox energy in a proton gradient. The polypeptide is NAD(P)H-quinone oxidoreductase subunit 3, chloroplastic (Vitis vinifera (Grape)).